Consider the following 153-residue polypeptide: ORM1-like protein 2 (153 aa).

Topologically, residues 1 to 21 are cytoplasmic; that stretch reads MNVGVAHSEVNPNTRVMNSRG. 2 consecutive transmembrane segments (helical) span residues 22 to 42 and 43 to 63; these read IWLA…SIPF and FSIP…MYIF. Residues 64 to 105 lie on the Cytoplasmic side of the membrane; that stretch reads LHTVKGTPFETPDQGKARLLTHWEQMDYGLQFTSSRKFLSIS. Residues 106–126 form a helical membrane-spanning segment; the sequence is PIVLYLLASFYTKYDAAHFLI. The Extracellular segment spans residues 127–153; the sequence is NTASLLSVLLPKLPQFHGVRLFGINKY.

The protein belongs to the ORM family. Ceramide-sensitive subunit of the serine palmitoyltransferase (SPT) complex, which is also composed of SPTLC1, SPTLC2/3 and SPTSSA/B.

It localises to the endoplasmic reticulum membrane. Its function is as follows. Plays an essential role in the homeostatic regulation of sphingolipid de novo biosynthesis by modulating the activity of the serine palmitoyltransferase (SPT) in response to ceramide levels. When complexed to SPT, the binding of ceramides to its N-terminus stabilizes a conformation that block SPT substrate entry, hence preventing SPT catalytic activity. Through this mechanism, maintains ceramide levels at sufficient concentrations for the production of complex sphingolipids, but which prevents the accumulation of ceramides to levels that trigger apoptosis. This Mus musculus (Mouse) protein is ORM1-like protein 2 (Ormdl2).